A 117-amino-acid chain; its full sequence is Large ribosomal subunit protein bL20 (117 aa).

The protein belongs to the bacterial ribosomal protein bL20 family.

In terms of biological role, binds directly to 23S ribosomal RNA and is necessary for the in vitro assembly process of the 50S ribosomal subunit. It is not involved in the protein synthesizing functions of that subunit. The polypeptide is Large ribosomal subunit protein bL20 (Marinobacter nauticus (strain ATCC 700491 / DSM 11845 / VT8) (Marinobacter aquaeolei)).